The chain runs to 361 residues: Peptide chain release factor 1 (361 aa).

Gln237 carries the N5-methylglutamine modification. Positions 287-297 (KQQKEQSDTRK) are enriched in basic and acidic residues. The interval 287–313 (KQQKEQSDTRKSLVGSGDRSERIRTYN) is disordered.

Belongs to the prokaryotic/mitochondrial release factor family. In terms of processing, methylated by PrmC. Methylation increases the termination efficiency of RF1.

It is found in the cytoplasm. Functionally, peptide chain release factor 1 directs the termination of translation in response to the peptide chain termination codons UAG and UAA. The polypeptide is Peptide chain release factor 1 (Francisella tularensis subsp. novicida (strain U112)).